A 356-amino-acid chain; its full sequence is MIETDKLAAERIIAATPASSHEEAFERALRPRQLDEYVGQEKVRDQLEIFIEAAKRRAEALDHVLLFGPPGLGKTTLAHIIAREMGVNLRQTSGPVLERAGDLAALLTNLEANDVLFIDEIHRLSPVVEEILYPALEDYQIDIMIGEGPAARSVKLDLQPFTLVGATTRAGMLTNPLRDRFGIVARLEFYDAEQLSRIVRRSAALLNAQIDPAGALEIAKRSRGTPRIANRLLRRVRDYAEVKADGNITAAVADAALAMLDVDPVGFDLMDRKLLEAILHKFDGGPVGVDNLAAAIGEERDTIEDVLEPYLIQQGFLQRTPRGRVATLLTYRHFGLATPDAASPVRNLWDTPDAER.

A large ATPase domain (RuvB-L) region spans residues 4–190 (TDKLAAERII…FGIVARLEFY (187 aa)). ATP contacts are provided by residues Leu-29, Arg-30, Gly-71, Lys-74, Thr-75, Thr-76, 137–139 (EDY), Arg-180, Tyr-190, and Arg-227. Thr-75 provides a ligand contact to Mg(2+). The tract at residues 191–261 (DAEQLSRIVR…VADAALAMLD (71 aa)) is small ATPAse domain (RuvB-S). Residues 264-356 (PVGFDLMDRK…NLWDTPDAER (93 aa)) are head domain (RuvB-H). Arg-300, Arg-319, and Arg-324 together coordinate DNA.

This sequence belongs to the RuvB family. As to quaternary structure, homohexamer. Forms an RuvA(8)-RuvB(12)-Holliday junction (HJ) complex. HJ DNA is sandwiched between 2 RuvA tetramers; dsDNA enters through RuvA and exits via RuvB. An RuvB hexamer assembles on each DNA strand where it exits the tetramer. Each RuvB hexamer is contacted by two RuvA subunits (via domain III) on 2 adjacent RuvB subunits; this complex drives branch migration. In the full resolvosome a probable DNA-RuvA(4)-RuvB(12)-RuvC(2) complex forms which resolves the HJ.

Its subcellular location is the cytoplasm. It catalyses the reaction ATP + H2O = ADP + phosphate + H(+). Functionally, the RuvA-RuvB-RuvC complex processes Holliday junction (HJ) DNA during genetic recombination and DNA repair, while the RuvA-RuvB complex plays an important role in the rescue of blocked DNA replication forks via replication fork reversal (RFR). RuvA specifically binds to HJ cruciform DNA, conferring on it an open structure. The RuvB hexamer acts as an ATP-dependent pump, pulling dsDNA into and through the RuvAB complex. RuvB forms 2 homohexamers on either side of HJ DNA bound by 1 or 2 RuvA tetramers; 4 subunits per hexamer contact DNA at a time. Coordinated motions by a converter formed by DNA-disengaged RuvB subunits stimulates ATP hydrolysis and nucleotide exchange. Immobilization of the converter enables RuvB to convert the ATP-contained energy into a lever motion, pulling 2 nucleotides of DNA out of the RuvA tetramer per ATP hydrolyzed, thus driving DNA branch migration. The RuvB motors rotate together with the DNA substrate, which together with the progressing nucleotide cycle form the mechanistic basis for DNA recombination by continuous HJ branch migration. Branch migration allows RuvC to scan DNA until it finds its consensus sequence, where it cleaves and resolves cruciform DNA. The sequence is that of Holliday junction branch migration complex subunit RuvB from Burkholderia thailandensis (strain ATCC 700388 / DSM 13276 / CCUG 48851 / CIP 106301 / E264).